Here is a 367-residue protein sequence, read N- to C-terminus: Protein RecA (367 aa).

73–80 contacts ATP; that stretch reads GPESSGKT.

Belongs to the RecA family.

The protein localises to the cytoplasm. Its function is as follows. Can catalyze the hydrolysis of ATP in the presence of single-stranded DNA, the ATP-dependent uptake of single-stranded DNA by duplex DNA, and the ATP-dependent hybridization of homologous single-stranded DNAs. It interacts with LexA causing its activation and leading to its autocatalytic cleavage. In Delftia acidovorans (strain DSM 14801 / SPH-1), this protein is Protein RecA.